A 390-amino-acid polypeptide reads, in one-letter code: Putative 8-amino-7-oxononanoate synthase (390 aa).

Arginine 19 provides a ligand contact to substrate. 105 to 106 (GY) serves as a coordination point for pyridoxal 5'-phosphate. Histidine 130 contributes to the substrate binding site. Residues serine 177, 202 to 205 (DEAH), and 234 to 237 (TFSK) contribute to the pyridoxal 5'-phosphate site. Lysine 237 carries the N6-(pyridoxal phosphate)lysine modification. Threonine 351 contributes to the substrate binding site.

The protein belongs to the class-II pyridoxal-phosphate-dependent aminotransferase family. BioF subfamily. Homodimer. Requires pyridoxal 5'-phosphate as cofactor.

It catalyses the reaction 6-carboxyhexanoyl-[ACP] + L-alanine + H(+) = (8S)-8-amino-7-oxononanoate + holo-[ACP] + CO2. Its pathway is cofactor biosynthesis; biotin biosynthesis. Functionally, catalyzes the decarboxylative condensation of pimeloyl-[acyl-carrier protein] and L-alanine to produce 8-amino-7-oxononanoate (AON), [acyl-carrier protein], and carbon dioxide. This chain is Putative 8-amino-7-oxononanoate synthase (bioF), found in Geobacillus kaustophilus (strain HTA426).